The following is a 192-amino-acid chain: Putative acetyltransferase YjbC (192 aa).

The region spanning 1–139 (MNWYEKLSEY…MEILYWSPKT (139 aa)) is the N-acetyltransferase domain.

It is found in the cytoplasm. The chain is Putative acetyltransferase YjbC (yjbC) from Bacillus subtilis (strain 168).